Here is a 114-residue protein sequence, read N- to C-terminus: KVHQVIGAVVDVKFRVPVGAGTLGRIINVTGDPIDERGKIGLFGGAGVGKTKVALVFGQMNEPPGARARFTQAGSEVSALLGRMRGISELGIYPAVDPLDSKSRVQQMLQEYKS.

44 to 51 (GGAGVGKT) provides a ligand contact to ATP.

This sequence belongs to the ATPase alpha/beta chains family. As to quaternary structure, F-type ATPases have 2 components, CF(1) - the catalytic core - and CF(0) - the membrane proton channel. CF(1) has five subunits: alpha(3), beta(3), gamma(1), delta(1), epsilon(1). CF(0) has three main subunits: a, b and c.

It is found in the mitochondrion. It localises to the mitochondrion inner membrane. It catalyses the reaction ATP + H2O + 4 H(+)(in) = ADP + phosphate + 5 H(+)(out). In terms of biological role, mitochondrial membrane ATP synthase (F(1)F(0) ATP synthase or Complex V) produces ATP from ADP in the presence of a proton gradient across the membrane which is generated by electron transport complexes of the respiratory chain. F-type ATPases consist of two structural domains, F(1) - containing the extramembraneous catalytic core, and F(0) - containing the membrane proton channel, linked together by a central stalk and a peripheral stalk. During catalysis, ATP synthesis in the catalytic domain of F(1) is coupled via a rotary mechanism of the central stalk subunits to proton translocation. Subunits alpha and beta form the catalytic core in F(1). Rotation of the central stalk against the surrounding alpha(3)beta(3) subunits leads to hydrolysis of ATP in three separate catalytic sites on the beta subunits. The polypeptide is ATP synthase subunit beta, mitochondrial (atp2) (Penicillium glabrum (Penicillium frequentans)).